The chain runs to 474 residues: Trehalose-6-phosphate synthase (474 aa).

A D-glucose 6-phosphate-binding site is contributed by Arg10. Gly22–Gly23 is a UDP-alpha-D-glucose binding site. Positions 77 and 131 each coordinate D-glucose 6-phosphate. The UDP-alpha-D-glucose site is built by Arg263 and Lys268. Arg301 is a D-glucose 6-phosphate binding site. Residues Phe340 and Leu366 to Glu370 each bind UDP-alpha-D-glucose.

Belongs to the glycosyltransferase 20 family. As to quaternary structure, homotetramer.

The enzyme catalyses D-glucose 6-phosphate + UDP-alpha-D-glucose = alpha,alpha-trehalose 6-phosphate + UDP + H(+). Its pathway is glycan biosynthesis; trehalose biosynthesis. Functionally, probably involved in the osmoprotection via the biosynthesis of trehalose. Catalyzes the transfer of glucose from UDP-alpha-D-glucose (UDP-Glc) to D-glucose 6-phosphate (Glc-6-P) to form trehalose-6-phosphate. Acts with retention of the anomeric configuration of the UDP-sugar donor. The protein is Trehalose-6-phosphate synthase of Escherichia coli O1:K1 / APEC.